The sequence spans 540 residues: MDCKVVSLNEKDQFIPKIKSSDPVITGLFQYDAAQQTSFEKRMSKENNGREAALANVIREYMSDLKLSKLSSEQELNIQHLANGSKVVIGGQQAGLFGGPLYTFHKIFSIITLSKELTDTHKQQVVPVFWIAGEDHDFDEVNHTFVYNENHGSLHKVKYHTMEMPETTVSRYYPDKAELKQTLKTMFIHMKETVHTQGLLEICDRIIDQYDSWTDMFKALLHETFKAYGVLFIDAQFEPLRKMEAPMFKKILKKHQLLDDAFRATQQRTQNQGLNAMIQTDTNVHLFLHDENMRQLVSYDGKHFKLNKTDKTYIKEEIINIAENQPELFSNNVVTRPLMEEWLFNTVAFVGGPSEIKYWAELKDVFELFDVEMPIVMPRLRITYLNDRIEKLLSKYNIPLEKVLVDGVEGERSKFIREQASHQFIEKVEGMIEQQRRLNKDLLDEVAGNQNNINLVNKNNEIHIQQYDYLLKRYLLNIERENDISMKQFREIQETLHPMGGLQERIWNPLQILNDFGTDVFKPSTYPPLSYTFDHIIIKP.

The stretch at 425-453 (IEKVEGMIEQQRRLNKDLLDEVAGNQNNI) forms a coiled coil.

It belongs to the BshC family.

Involved in bacillithiol (BSH) biosynthesis. May catalyze the last step of the pathway, the addition of cysteine to glucosamine malate (GlcN-Mal) to generate BSH. The chain is Putative cysteine ligase BshC from Staphylococcus aureus (strain NCTC 8325 / PS 47).